The chain runs to 304 residues: Mitochondrial glycine transporter (304 aa).

Solcar repeat units follow at residues 25 to 114 (HPVI…LKQY), 121 to 205 (PTAL…TKNI), and 215 to 299 (LIPI…MMAK). The next 6 helical transmembrane spans lie at 31 to 56 (FLCGSISGTCSTLLFQPLDLLKTRLQ), 89 to 115 (GMSPSIVRCVPGVGIYFGTLYSLKQYF), 127 to 152 (VMLGVGSRSVAGVCMSPITVIKTRYE), 180 to 203 (GLTATLLRDAPFSGIYLMFYNQTK), 219 to 245 (TNFSCGIFAGILASLVTQPADVIKTHM), and 274 to 292 (GGIPRALRRTLMAAMAWTV).

The protein belongs to the mitochondrial carrier (TC 2.A.29) family. SLC25A38 subfamily. In terms of tissue distribution, preferentially expressed in erythroid cells.

The protein resides in the mitochondrion inner membrane. The enzyme catalyses glycine(in) = glycine(out). In terms of biological role, mitochondrial glycine transporter that imports glycine into the mitochondrial matrix. Plays an important role in providing glycine for the first enzymatic step in heme biosynthesis, the condensation of glycine with succinyl-CoA to produce 5-aminolevulinate (ALA) in the mitochondrial matrix. Required during erythropoiesis. Plays a role as pro-apoptotic protein that induces caspase-dependent apoptosis. In Homo sapiens (Human), this protein is Mitochondrial glycine transporter.